The primary structure comprises 397 residues: MFPTDPVSNLATLIRCPSVTPAEGGALTALESMLTPIGFKADRIVAREAGTPDIENLYARIGVGGPHLMFAGHTDVVPVGDEIAWSHPPFSAAIAEGEMYGRGAVDMKGGIACFVAAVARHIEKHGAPKGSISFLITGDEEGPAINGTVKLLEWAAAKGERWDACLVGEPTNPGGIGEMIKIGRRGSLSGRITVQGVQGHAAYPHLADNPVRSILQLAHALMDPPFDDGTENFQPSNLEVTTIDVGNAAVNVIPAKASAAFNVRFNDLWTAESLMTEIVARLDRAASAGALRPGRAPVKYEIVWNERPSHVFLTRNDALIESLSGAVEAVTGQQPRLSTTGGTSDARFIKDYCPVVEFGLVGKTMHMVDERVALADLETLTGIYETFIARWFDHAAA.

His73 contacts Zn(2+). Asp75 is an active-site residue. Asp106 is a binding site for Zn(2+). The active-site Proton acceptor is Glu140. Zn(2+) is bound by residues Glu141, Glu169, and His366.

The protein belongs to the peptidase M20A family. DapE subfamily. Homodimer. Zn(2+) is required as a cofactor. Co(2+) serves as cofactor.

The enzyme catalyses N-succinyl-(2S,6S)-2,6-diaminopimelate + H2O = (2S,6S)-2,6-diaminopimelate + succinate. It functions in the pathway amino-acid biosynthesis; L-lysine biosynthesis via DAP pathway; LL-2,6-diaminopimelate from (S)-tetrahydrodipicolinate (succinylase route): step 3/3. Functionally, catalyzes the hydrolysis of N-succinyl-L,L-diaminopimelic acid (SDAP), forming succinate and LL-2,6-diaminopimelate (DAP), an intermediate involved in the bacterial biosynthesis of lysine and meso-diaminopimelic acid, an essential component of bacterial cell walls. The polypeptide is Succinyl-diaminopimelate desuccinylase (Sinorhizobium medicae (strain WSM419) (Ensifer medicae)).